The primary structure comprises 116 residues: Non-specific lipid-transfer protein C, cotyledon-specific isoform (116 aa).

The N-terminal stretch at 1–24 (MKNVVFSVLLLLSFLFCLANTNEA) is a signal peptide. Disulfide bonds link cysteine 28/cysteine 76, cysteine 38/cysteine 53, cysteine 54/cysteine 98, and cysteine 74/cysteine 112.

Belongs to the plant LTP family.

Plant non-specific lipid-transfer proteins transfer phospholipids as well as galactolipids across membranes. May play a role in wax or cutin deposition in the cell walls of expanding epidermal cells and certain secretory tissues. This chain is Non-specific lipid-transfer protein C, cotyledon-specific isoform, found in Ricinus communis (Castor bean).